Reading from the N-terminus, the 428-residue chain is Glutamyl-tRNA reductase (428 aa).

Substrate is bound by residues 49–52 (TCNR), Ser-109, 114–116 (EGQ), and Gln-120. Residue Cys-50 is the Nucleophile of the active site. An NADP(+)-binding site is contributed by 189 to 194 (GAGKMS).

The protein belongs to the glutamyl-tRNA reductase family. Homodimer.

The enzyme catalyses (S)-4-amino-5-oxopentanoate + tRNA(Glu) + NADP(+) = L-glutamyl-tRNA(Glu) + NADPH + H(+). It participates in porphyrin-containing compound metabolism; protoporphyrin-IX biosynthesis; 5-aminolevulinate from L-glutamyl-tRNA(Glu): step 1/2. Its pathway is porphyrin-containing compound metabolism; chlorophyll biosynthesis. Catalyzes the NADPH-dependent reduction of glutamyl-tRNA(Glu) to glutamate 1-semialdehyde (GSA). The polypeptide is Glutamyl-tRNA reductase (Gloeothece citriformis (strain PCC 7424) (Cyanothece sp. (strain PCC 7424))).